A 129-amino-acid chain; its full sequence is Phosphoribosyl-AMP cyclohydrolase (129 aa).

Aspartate 76 is a Mg(2+) binding site. Zn(2+) is bound at residue cysteine 77. Mg(2+)-binding residues include aspartate 78 and aspartate 80. Positions 97 and 104 each coordinate Zn(2+).

It belongs to the PRA-CH family. Homodimer. The cofactor is Mg(2+). Zn(2+) is required as a cofactor.

The protein localises to the cytoplasm. It carries out the reaction 1-(5-phospho-beta-D-ribosyl)-5'-AMP + H2O = 1-(5-phospho-beta-D-ribosyl)-5-[(5-phospho-beta-D-ribosylamino)methylideneamino]imidazole-4-carboxamide. It functions in the pathway amino-acid biosynthesis; L-histidine biosynthesis; L-histidine from 5-phospho-alpha-D-ribose 1-diphosphate: step 3/9. Its function is as follows. Catalyzes the hydrolysis of the adenine ring of phosphoribosyl-AMP. The chain is Phosphoribosyl-AMP cyclohydrolase from Verminephrobacter eiseniae (strain EF01-2).